Here is a 145-residue protein sequence, read N- to C-terminus: MEFPDLGKHCSEKTCKQLDFLPVKCDACKQDFCKDHFPYAAHKCPFAFQKDVHVPVCPLCNTPIPVKKGQIPDVVVGDHIDRDCDSHPGKKKEKIFTYRCSKEGCKKKEMLQMVCAQCHGNFCIQHRHPLDHSCRHGSRPTIKAG.

2 consecutive AN1-type zinc fingers follow at residues P4 to V52 and K94 to I142. Positions 10, 15, 25, 28, 33, 36, 42, 44, 100, 105, 115, 118, 123, 126, 132, and 134 each coordinate Zn(2+).

Its subcellular location is the cytoplasm. The protein resides in the nucleus. The chain is AN1-type zinc finger protein 2A (ZFAND2A) from Homo sapiens (Human).